Reading from the N-terminus, the 110-residue chain is MLTKITFFERFEQDILSGAKTITLRNEAESHVFAGQILPVSTFEADRWFCDIKVIEVVPVLFSALTEQHAAQENMTLPELRRVIQEIYPGLEQLFQIHFCVVNTRAHPIN.

Residues 6 to 93 (TFFERFEQDI…IQEIYPGLEQ (88 aa)) enclose the ASCH domain. The active-site Proton acceptor is lysine 20. Threonine 23 acts as the Nucleophile in catalysis. The Proton donor role is filled by glutamate 73.

This sequence belongs to the N(4)-acetylcytidine amidohydrolase family.

It catalyses the reaction N(4)-acetylcytidine + H2O = cytidine + acetate + H(+). The enzyme catalyses N(4)-acetyl-2'-deoxycytidine + H2O = 2'-deoxycytidine + acetate + H(+). The catalysed reaction is N(4)-acetylcytosine + H2O = cytosine + acetate + H(+). Its function is as follows. Catalyzes the hydrolysis of N(4)-acetylcytidine (ac4C). This is N(4)-acetylcytidine amidohydrolase from Shewanella sp. (strain ANA-3).